The following is a 410-amino-acid chain: Sprouty-related, EVH1 domain-containing protein 2 (410 aa).

The WH1 domain maps to 5 to 122; that stretch reads THPDDDSYIV…RGVRKAIEDL (118 aa). The disordered stretch occupies residues 127 to 171; the sequence is TTSSSTLHNEAELGDDDVFTTATDSSSNSSQKREPTTRTISSPTS. Over residues 146 to 156 the composition is skewed to polar residues; that stretch reads TTATDSSSNSS. A KBD domain is found at 197–252; that stretch reads SYPQVTFPEDDEEIVRINPREKIWMTGYEDYRHAPVRGKYLDTTEDADSYVRFAKG. Tyr224 and Tyr227 each carry phosphotyrosine. The tract at residues 274-294 is disordered; it reads DPKGSVIKTQPPRAKSRRRKE. Residues 300–408 form the SPR domain; the sequence is RCVYCRDMFN…CRCCGGKHKA (109 aa).

Homodimer and heterodimer. Able to interact with SPRED1 to form heterodimers. Interacts with RAS. May interact with ZDHHC13 (via ANK repeats) and ZDHHC17 (via ANK repeats). Interacts with TESK1. Interacts with NF1. In terms of processing, phosphorylated on serine and threonine residues. Phosphorylated on tyrosine. Phosphorylation of Tyr-224 and Tyr-227 are required for ubiquitination. Post-translationally, ubiquitinated; leading to degradation by the proteasome. As to expression, predominantly expressed in lung, liver and testis. In testis, it is specially found in mature spermatids projecting into the lumen of the seminiferous. Strongly expressed in glandular epithelia. Also expressed in embryonic tissues such as heart, lung, liver and brain.

It localises to the cell membrane. It is found in the cytoplasmic vesicle. The protein localises to the secretory vesicle membrane. Its subcellular location is the cytoplasm. Negatively regulates Ras signaling pathways and downstream activation of MAP kinases. Recruits and translocates NF1 to the cell membrane, thereby enabling NF1-dependent hydrolysis of active GTP-bound Ras to inactive GDP-bound Ras. Inhibits fibroblast growth factor (FGF)-induced retinal lens fiber differentiation, probably by inhibiting FGF-mediated phosphorylation of ERK1/2. Inhibits TGFB-induced epithelial-to-mesenchymal transition in lens epithelial cells. This is Sprouty-related, EVH1 domain-containing protein 2 (Spred2) from Mus musculus (Mouse).